Reading from the N-terminus, the 407-residue chain is Melanoma-associated antigen B6B (407 aa).

The span at 1–16 (MPRGQKSKLRARGKRR) shows a compositional bias: basic residues. Residues 1–185 (MPRGQKSKLR…ESLSSSKRAA (185 aa)) form a disordered region. Composition is skewed to polar residues over residues 56–68 (SGSS…QGAS) and 94–109 (PSTS…SQGA). Positions 123 to 132 (KSDEAAKGQN) are enriched in basic and acidic residues. Polar residues predominate over residues 133-155 (EKSPSTSRDASVPQESQGASPTG). In terms of domain architecture, MAGE spans 195 to 394 (IKRKANKMVQ…GLYPHLYEDA (200 aa)).

This chain is Melanoma-associated antigen B6B, found in Homo sapiens (Human).